The chain runs to 115 residues: Large ribosomal subunit protein bL20 (115 aa).

Belongs to the bacterial ribosomal protein bL20 family.

Its function is as follows. Binds directly to 23S ribosomal RNA and is necessary for the in vitro assembly process of the 50S ribosomal subunit. It is not involved in the protein synthesizing functions of that subunit. The sequence is that of Large ribosomal subunit protein bL20 from Pelodictyon phaeoclathratiforme (strain DSM 5477 / BU-1).